Consider the following 263-residue polypeptide: ATP synthase subunit a (263 aa).

A propeptide spans 1–14 (MYLNNNNNMKYYIN) (removed in mature form). Transmembrane regions (helical) follow at residues 35-57 (FSFI…ILTM), 95-117 (VWGY…NLIS), 129-151 (VVFV…FYTH), 156-178 (FGLF…IELL), 191-213 (LSAN…FNLM), and 228-250 (IAIL…VWCI).

Belongs to the ATPase A chain family. In terms of assembly, F-type ATPases have 2 components, CF(1) - the catalytic core - and CF(0) - the membrane proton channel. In yeast, the dimeric form of ATP synthase consists of 18 polypeptides: alpha, beta, gamma, delta, epsilon, 4 (B), 5 (OSCP), 6 (A), 8, 9 (C), d, E (Tim11), f, g, h, i, j and k.

It is found in the mitochondrion inner membrane. Mitochondrial membrane ATP synthase (F(1)F(0) ATP synthase or Complex V) produces ATP from ADP in the presence of a proton gradient across the membrane which is generated by electron transport complexes of the respiratory chain. F-type ATPases consist of two structural domains, F(1) - containing the extramembraneous catalytic core and F(0) - containing the membrane proton channel, linked together by a central stalk and a peripheral stalk. During catalysis, ATP synthesis in the catalytic domain of F(1) is coupled via a rotary mechanism of the central stalk subunits to proton translocation. Key component of the proton channel; it may play a direct role in the translocation of protons across the membrane. This chain is ATP synthase subunit a (ATP6), found in Eremothecium gossypii (strain ATCC 10895 / CBS 109.51 / FGSC 9923 / NRRL Y-1056) (Yeast).